Consider the following 229-residue polypeptide: Ribonuclease 3 (229 aa).

In terms of domain architecture, RNase III spans 2–130 (FEKLQDVLCY…ILGAIFLDGG (129 aa)). Residue Glu-43 participates in Mg(2+) binding. Asp-47 is an active-site residue. Residues Asp-116 and Glu-119 each coordinate Mg(2+). The active site involves Glu-119. Positions 157–226 (DAKSTLQELT…AGLALELLEG (70 aa)) constitute a DRBM domain.

Belongs to the ribonuclease III family. As to quaternary structure, homodimer. The cofactor is Mg(2+).

The protein localises to the cytoplasm. It carries out the reaction Endonucleolytic cleavage to 5'-phosphomonoester.. Functionally, digests double-stranded RNA. Involved in the processing of primary rRNA transcript to yield the immediate precursors to the large and small rRNAs (23S and 16S). Processes some mRNAs, and tRNAs when they are encoded in the rRNA operon. Processes pre-crRNA and tracrRNA of type II CRISPR loci if present in the organism. The chain is Ribonuclease 3 from Oleidesulfovibrio alaskensis (strain ATCC BAA-1058 / DSM 17464 / G20) (Desulfovibrio alaskensis).